The primary structure comprises 77 residues: Secapin (77 aa).

The first 32 residues, 1-32 (MKNYSKNATHLITVLLFSFVVILLIIPSKCEA), serve as a signal peptide directing secretion. The propeptide occupies 33 to 52 (VSNDMQPLEARSADLVPEPR). A disulfide bond links Cys61 and Cys72.

It belongs to the secapin family. Expressed by the venom gland.

The protein localises to the secreted. Its function is as follows. Serine protease inhibitor which exhibits antifibrinolytic, antielastolytic and antimicrobial activities. Displays antimicrobial activity against bacteria and fungi. Likely functions in the innate immune response to microbial infection and possibly in the venom, as an antifibrinolytic agent. Not toxic to mice but does induce slight sedation at higher doses (from 40 mg/kg). At a dose of 80 mg/kg, sedation occurs 15 minutes after injection and is accompanied by piloerection and hypothermia. This is Secapin from Apis mellifera (Honeybee).